Consider the following 292-residue polypeptide: Phosphatidylserine decarboxylase proenzyme (292 aa).

Residues aspartate 89, histidine 146, and serine 252 each act as charge relay system; for autoendoproteolytic cleavage activity in the active site. The active-site Schiff-base intermediate with substrate; via pyruvic acid; for decarboxylase activity is the serine 252. At serine 252 the chain carries Pyruvic acid (Ser); by autocatalysis.

It belongs to the phosphatidylserine decarboxylase family. PSD-B subfamily. Prokaryotic type I sub-subfamily. As to quaternary structure, heterodimer of a large membrane-associated beta subunit and a small pyruvoyl-containing alpha subunit. Requires pyruvate as cofactor. Is synthesized initially as an inactive proenzyme. Formation of the active enzyme involves a self-maturation process in which the active site pyruvoyl group is generated from an internal serine residue via an autocatalytic post-translational modification. Two non-identical subunits are generated from the proenzyme in this reaction, and the pyruvate is formed at the N-terminus of the alpha chain, which is derived from the carboxyl end of the proenzyme. The autoendoproteolytic cleavage occurs by a canonical serine protease mechanism, in which the side chain hydroxyl group of the serine supplies its oxygen atom to form the C-terminus of the beta chain, while the remainder of the serine residue undergoes an oxidative deamination to produce ammonia and the pyruvoyl prosthetic group on the alpha chain. During this reaction, the Ser that is part of the protease active site of the proenzyme becomes the pyruvoyl prosthetic group, which constitutes an essential element of the active site of the mature decarboxylase.

It localises to the cell membrane. The enzyme catalyses a 1,2-diacyl-sn-glycero-3-phospho-L-serine + H(+) = a 1,2-diacyl-sn-glycero-3-phosphoethanolamine + CO2. The protein operates within phospholipid metabolism; phosphatidylethanolamine biosynthesis; phosphatidylethanolamine from CDP-diacylglycerol: step 2/2. Functionally, catalyzes the formation of phosphatidylethanolamine (PtdEtn) from phosphatidylserine (PtdSer). The protein is Phosphatidylserine decarboxylase proenzyme of Shewanella sp. (strain MR-4).